A 72-amino-acid chain; its full sequence is ATP synthase protein 8 (72 aa).

The chain crosses the membrane as a helical span at residues 16-36 (WTLIALFLLFSFLVVSVLPAV).

Belongs to the ATPase protein 8 family. As to quaternary structure, F-type ATPases have 2 components, CF(1) - the catalytic core - and CF(0) - the membrane proton channel.

The protein localises to the mitochondrion membrane. Functionally, mitochondrial membrane ATP synthase (F(1)F(0) ATP synthase or Complex V) produces ATP from ADP in the presence of a proton gradient across the membrane which is generated by electron transport complexes of the respiratory chain. F-type ATPases consist of two structural domains, F(1) - containing the extramembraneous catalytic core and F(0) - containing the membrane proton channel, linked together by a central stalk and a peripheral stalk. During catalysis, ATP synthesis in the catalytic domain of F(1) is coupled via a rotary mechanism of the central stalk subunits to proton translocation. Part of the complex F(0) domain. Minor subunit located with subunit a in the membrane. In Metridium senile (Brown sea anemone), this protein is ATP synthase protein 8 (MTATP8).